The chain runs to 64 residues: Large ribosomal subunit protein eL37 (64 aa).

Positions 20, 23, 35, and 38 each coordinate Zn(2+). A C4-type zinc finger spans residues 20–38 (CRRCGRRAFHVRKKVCAAC).

It belongs to the eukaryotic ribosomal protein eL37 family. Zn(2+) is required as a cofactor.

In terms of biological role, binds to the 23S rRNA. The chain is Large ribosomal subunit protein eL37 from Methanococcus maripaludis (strain C6 / ATCC BAA-1332).